The primary structure comprises 194 residues: Imidazoleglycerol-phosphate dehydratase (194 aa).

Belongs to the imidazoleglycerol-phosphate dehydratase family.

It is found in the cytoplasm. The enzyme catalyses D-erythro-1-(imidazol-4-yl)glycerol 3-phosphate = 3-(imidazol-4-yl)-2-oxopropyl phosphate + H2O. It participates in amino-acid biosynthesis; L-histidine biosynthesis; L-histidine from 5-phospho-alpha-D-ribose 1-diphosphate: step 6/9. The sequence is that of Imidazoleglycerol-phosphate dehydratase from Caldicellulosiruptor saccharolyticus (strain ATCC 43494 / DSM 8903 / Tp8T 6331).